The chain runs to 150 residues: Snake venom vascular endothelial growth factor toxin barietin (150 aa).

An N-terminal signal peptide occupies residues 1–24 (MAAYLLAVAILFCIQGWPSGTVQG). E25 is subject to Pyrrolidone carboxylic acid (Glu). Disulfide bonds link C38–C80, C69–C115, and C73–C117. The tract at residues 119-150 (PRSGSRVNIGKHKRSPEEGEREPSSPLTPGSL) is disordered. Positions 122 to 150 (GSRVNIGKHKRSPEEGEREPSSPLTPGSL) are excised as a propeptide.

The protein belongs to the PDGF/VEGF growth factor family. Snake venom VEGF subfamily. In terms of assembly, homodimer; disulfide-linked. Interacts with high affinity with VEGF receptor-2 (KDR), and with a lower affinity with VEGF receptor-1 (FLT1). Does not bind VEGF receptor-3 (FLT4) and neuropilin-1 (NRP1). In terms of tissue distribution, expressed by the venom gland.

The protein localises to the secreted. Functionally, snake venom VEGFs that may contribute to venom dispersion and prey subjugation by inducing vascular permeability and hypotension. This protein induces an increase in capillary permeability after intradermal injection, as well as a drastic hypotensive effect after intravenous injection. The hypotension is mediated by nitric oxide (NO), which is produced by VEGF-activated endothelium NO synthase. Also induces angiogenesis in vitro, probably through VEGF receptor (KDR/VEGFR-2) signaling. In Bitis arietans (African puff adder), this protein is Snake venom vascular endothelial growth factor toxin barietin.